Here is a 67-residue protein sequence, read N- to C-terminus: Large ribosomal subunit protein bL31 (67 aa).

It belongs to the bacterial ribosomal protein bL31 family. Type A subfamily. Part of the 50S ribosomal subunit.

Binds the 23S rRNA. This chain is Large ribosomal subunit protein bL31, found in Finegoldia magna (strain ATCC 29328 / DSM 20472 / WAL 2508) (Peptostreptococcus magnus).